Reading from the N-terminus, the 73-residue chain is Translation initiation factor IF-1 1 (73 aa).

Residues 1–72 (MAKEELIEFG…TKGRINFRHK (72 aa)) form the S1-like domain.

It belongs to the IF-1 family. In terms of assembly, component of the 30S ribosomal translation pre-initiation complex which assembles on the 30S ribosome in the order IF-2 and IF-3, IF-1 and N-formylmethionyl-tRNA(fMet); mRNA recruitment can occur at any time during PIC assembly.

It localises to the cytoplasm. Its function is as follows. One of the essential components for the initiation of protein synthesis. Stabilizes the binding of IF-2 and IF-3 on the 30S subunit to which N-formylmethionyl-tRNA(fMet) subsequently binds. Helps modulate mRNA selection, yielding the 30S pre-initiation complex (PIC). Upon addition of the 50S ribosomal subunit IF-1, IF-2 and IF-3 are released leaving the mature 70S translation initiation complex. The polypeptide is Translation initiation factor IF-1 1 (Cupriavidus pinatubonensis (strain JMP 134 / LMG 1197) (Cupriavidus necator (strain JMP 134))).